Consider the following 299-residue polypeptide: Kruppel-like factor 2 (299 aa).

2 disordered regions span residues 19-38 (YQNA…SHHH) and 146-189 (YSFS…RRDK). Positions 23-38 (HHQHHQQHYHQQSHHH) are enriched in basic residues. Over residues 153–180 (SGKDEEDPRIPLKDRGRVYHPQSTEKPK) the composition is skewed to basic and acidic residues. 3 consecutive C2H2-type zinc fingers follow at residues 198–222 (HKCF…ERVH), 228–252 (YPCE…YRKH), and 258–280 (FACK…MKRH).

Belongs to the krueppel C2H2-type zinc-finger protein family. As to expression, expressed predominantly in intestine.

The protein resides in the nucleus. In terms of biological role, probable transcription factor which regulates lipid metabolism. The polypeptide is Kruppel-like factor 2 (Caenorhabditis elegans).